The sequence spans 350 residues: MSKTRKIIHIDMDYFFAQVEEKANPSLKDKPFAVGGTNPKRGVISTCNYIAREYGVRSAMPTAIAMQKCPNLILLNTDFAKYKATSAVIRDIFYSFTDKVEPLSLDEAYLDVTDVKEYKNSATLIAQAIKQEIFNKTGLTGSAGVAPNKLLAKIASDINKPNGLYVITPEQVDSFVKDLPVKKLFGVGKVSQEKLKNMNVETCLDLQQLSLATLVDKFGKFGSSLYNYARGIDNREVNPVRIRKSVSVENTYLEDLKTLEACLEKLPNLYNKLTSRMTEEHYKSIIGIVVKFTDTKFNKTSLTRVAKTLDKKVLKNLIIELHQKQNYHIRLIGIGIKLGEIDDRQLSLVF.

The 182-residue stretch at 7–188 folds into the UmuC domain; that stretch reads IIHIDMDYFF…LPVKKLFGVG (182 aa). Mg(2+) is bound by residues aspartate 11 and aspartate 106. Glutamate 107 is a catalytic residue.

It belongs to the DNA polymerase type-Y family. In terms of assembly, monomer. It depends on Mg(2+) as a cofactor.

The protein resides in the cytoplasm. It carries out the reaction DNA(n) + a 2'-deoxyribonucleoside 5'-triphosphate = DNA(n+1) + diphosphate. Its function is as follows. Poorly processive, error-prone DNA polymerase involved in untargeted mutagenesis. Copies undamaged DNA at stalled replication forks, which arise in vivo from mismatched or misaligned primer ends. These misaligned primers can be extended by PolIV. Exhibits no 3'-5' exonuclease (proofreading) activity. May be involved in translesional synthesis, in conjunction with the beta clamp from PolIII. The sequence is that of DNA polymerase IV from Francisella philomiragia subsp. philomiragia (strain ATCC 25017 / CCUG 19701 / FSC 153 / O#319-036).